Here is a 242-residue protein sequence, read N- to C-terminus: Uridylate kinase (242 aa).

15–18 (KLSG) lines the ATP pocket. Gly-57 contacts UMP. Positions 58 and 62 each coordinate ATP. Residues Asp-78 and 139–146 (TGNPFFTT) contribute to the UMP site. ATP is bound by residues Thr-166, Tyr-172, and Asp-175.

It belongs to the UMP kinase family. As to quaternary structure, homohexamer.

Its subcellular location is the cytoplasm. The enzyme catalyses UMP + ATP = UDP + ADP. Its pathway is pyrimidine metabolism; CTP biosynthesis via de novo pathway; UDP from UMP (UMPK route): step 1/1. Its activity is regulated as follows. Inhibited by UTP. Its function is as follows. Catalyzes the reversible phosphorylation of UMP to UDP. This Acinetobacter baumannii (strain ATCC 17978 / DSM 105126 / CIP 53.77 / LMG 1025 / NCDC KC755 / 5377) protein is Uridylate kinase.